Consider the following 223-residue polypeptide: Neurotrophic factor BDNF precursor form (223 aa).

The signal sequence occupies residues 1 to 5 (SCMKA). Positions 6–114 (APMKEVSIRG…AANMSMRVRR (109 aa)) are excised as a propeptide. The N-linked (GlcNAc...) asparagine glycan is linked to Asn107. Cystine bridges form between Cys127–Cys194 and Cys172–Cys223.

Belongs to the NGF-beta family.

The protein resides in the secreted. Functionally, promotes the survival of neuronal populations that are all located either in the central nervous system or directly connected to it. In Candoia carinata (Papuan tree boa), this protein is Neurotrophic factor BDNF precursor form (BDNF).